Here is a 202-residue protein sequence, read N- to C-terminus: Imidazole glycerol phosphate synthase subunit HisH 2 (202 aa).

The region spanning 1-202 (MIVVIDYGVG…QLFKNFVELV (202 aa)) is the Glutamine amidotransferase type-1 domain. The Nucleophile role is filled by Cys80. Active-site residues include His183 and Glu185.

Heterodimer of HisH and HisF.

The protein localises to the cytoplasm. The catalysed reaction is 5-[(5-phospho-1-deoxy-D-ribulos-1-ylimino)methylamino]-1-(5-phospho-beta-D-ribosyl)imidazole-4-carboxamide + L-glutamine = D-erythro-1-(imidazol-4-yl)glycerol 3-phosphate + 5-amino-1-(5-phospho-beta-D-ribosyl)imidazole-4-carboxamide + L-glutamate + H(+). The enzyme catalyses L-glutamine + H2O = L-glutamate + NH4(+). It functions in the pathway amino-acid biosynthesis; L-histidine biosynthesis; L-histidine from 5-phospho-alpha-D-ribose 1-diphosphate: step 5/9. IGPS catalyzes the conversion of PRFAR and glutamine to IGP, AICAR and glutamate. The HisH subunit catalyzes the hydrolysis of glutamine to glutamate and ammonia as part of the synthesis of IGP and AICAR. The resulting ammonia molecule is channeled to the active site of HisF. The chain is Imidazole glycerol phosphate synthase subunit HisH 2 (hisH2) from Pseudomonas aeruginosa (strain ATCC 15692 / DSM 22644 / CIP 104116 / JCM 14847 / LMG 12228 / 1C / PRS 101 / PAO1).